The primary structure comprises 318 residues: tRNA-cytidine(32) 2-sulfurtransferase (318 aa).

Positions 52-57 match the PP-loop motif motif; that stretch reads SGGKDS. Cys127, Cys130, and Cys218 together coordinate [4Fe-4S] cluster.

Belongs to the TtcA family. In terms of assembly, homodimer. The cofactor is Mg(2+). [4Fe-4S] cluster serves as cofactor.

It is found in the cytoplasm. It carries out the reaction cytidine(32) in tRNA + S-sulfanyl-L-cysteinyl-[cysteine desulfurase] + AH2 + ATP = 2-thiocytidine(32) in tRNA + L-cysteinyl-[cysteine desulfurase] + A + AMP + diphosphate + H(+). It functions in the pathway tRNA modification. In terms of biological role, catalyzes the ATP-dependent 2-thiolation of cytidine in position 32 of tRNA, to form 2-thiocytidine (s(2)C32). The sulfur atoms are provided by the cysteine/cysteine desulfurase (IscS) system. In Actinobacillus pleuropneumoniae serotype 7 (strain AP76), this protein is tRNA-cytidine(32) 2-sulfurtransferase.